Reading from the N-terminus, the 462-residue chain is L-seryl-tRNA(Sec) selenium transferase (462 aa).

Lys-292 is modified (N6-(pyridoxal phosphate)lysine).

The protein belongs to the SelA family. Pyridoxal 5'-phosphate serves as cofactor.

Its subcellular location is the cytoplasm. The catalysed reaction is L-seryl-tRNA(Sec) + selenophosphate + H(+) = L-selenocysteinyl-tRNA(Sec) + phosphate. It functions in the pathway aminoacyl-tRNA biosynthesis; selenocysteinyl-tRNA(Sec) biosynthesis; selenocysteinyl-tRNA(Sec) from L-seryl-tRNA(Sec) (bacterial route): step 1/1. Functionally, converts seryl-tRNA(Sec) to selenocysteinyl-tRNA(Sec) required for selenoprotein biosynthesis. The polypeptide is L-seryl-tRNA(Sec) selenium transferase (Geobacter metallireducens (strain ATCC 53774 / DSM 7210 / GS-15)).